The sequence spans 301 residues: Acetylglutamate kinase (301 aa).

Substrate-binding positions include 76 to 77 (GG), arginine 98, and asparagine 192.

This sequence belongs to the acetylglutamate kinase family. ArgB subfamily.

The protein resides in the cytoplasm. It catalyses the reaction N-acetyl-L-glutamate + ATP = N-acetyl-L-glutamyl 5-phosphate + ADP. It participates in amino-acid biosynthesis; L-arginine biosynthesis; N(2)-acetyl-L-ornithine from L-glutamate: step 2/4. Catalyzes the ATP-dependent phosphorylation of N-acetyl-L-glutamate. The sequence is that of Acetylglutamate kinase from Chlorobaculum parvum (strain DSM 263 / NCIMB 8327) (Chlorobium vibrioforme subsp. thiosulfatophilum).